Consider the following 281-residue polypeptide: E3 ubiquitin-protein ligase MARCHF5 (281 aa).

The RING-CH-type zinc-finger motif lies at L9–V78. The Zn(2+) site is built by C17, C20, C36, C38, H46, C49, C68, and C71. A run of 4 helical transmembrane segments spans residues F102 to V122, P142 to I162, I212 to S232, and T241 to Q261.

Its subcellular location is the mitochondrion outer membrane. It is found in the endoplasmic reticulum membrane. The enzyme catalyses S-ubiquitinyl-[E2 ubiquitin-conjugating enzyme]-L-cysteine + [acceptor protein]-L-lysine = [E2 ubiquitin-conjugating enzyme]-L-cysteine + N(6)-ubiquitinyl-[acceptor protein]-L-lysine.. It functions in the pathway protein modification; protein ubiquitination. Mitochondrial E3 ubiquitin-protein ligase that plays a crucial role in the control of mitochondrial morphology by acting as a positive regulator of mitochondrial fission. May play a role in the prevention of cell senescence acting as a regulator of mitochondrial quality control. The protein is E3 ubiquitin-protein ligase MARCHF5 (MARCHF5) of Gallus gallus (Chicken).